A 329-amino-acid chain; its full sequence is Interleukin-12 subunit beta (329 aa).

Positions 1 to 22 (MCHQWLVLSWFSLVLLASPLMA) are cleaved as a signal peptide. In terms of domain architecture, Ig-like C2-type spans 29-106 (DVYVVELDWY…LSHSHLLLHK (78 aa)). A disulfide bond links cysteine 50 and cysteine 90. N-linked (GlcNAc...) asparagine glycosylation is found at asparagine 125, asparagine 135, and asparagine 223. The 92-residue stretch at 238–329 (PPKNLQLKPL…WSEWASVSCS (92 aa)) folds into the Fibronectin type-III domain.

The protein belongs to the IL-12B family. As to quaternary structure, heterodimer with IL12A; disulfide-linked. The heterodimer is known as interleukin IL-12. Heterodimer with IL23A; disulfide-linked. The heterodimer is known as interleukin IL-23. Also secreted as a monomer. Interacts with NBR1; this interaction promotes IL-12 secretion.

The protein localises to the secreted. Cytokine that can act as a growth factor for activated T and NK cells, enhance the lytic activity of NK/lymphokine-activated killer cells, and stimulate the production of IFN-gamma by resting PBMC. In terms of biological role, associates with IL23A to form the IL-23 interleukin, a heterodimeric cytokine which functions in innate and adaptive immunity. IL-23 may constitute with IL-17 an acute response to infection in peripheral tissues. IL-23 binds to a heterodimeric receptor complex composed of IL12RB1 and IL23R, activates the Jak-Stat signaling cascade, stimulates memory rather than naive T-cells and promotes production of pro-inflammatory cytokines. IL-23 induces autoimmune inflammation and thus may be responsible for autoimmune inflammatory diseases and may be important for tumorigenesis. The sequence is that of Interleukin-12 subunit beta (IL12B) from Equus caballus (Horse).